The sequence spans 447 residues: N-succinylarginine dihydrolase (447 aa).

Residues A19–S28, N110, and H137–R138 contribute to the substrate site. Residue E174 is part of the active site. Position 212 (R212) interacts with substrate. The active site involves H248. Residues D250 and N359 each contribute to the substrate site. C365 functions as the Nucleophile in the catalytic mechanism.

Belongs to the succinylarginine dihydrolase family. As to quaternary structure, homodimer.

The catalysed reaction is N(2)-succinyl-L-arginine + 2 H2O + 2 H(+) = N(2)-succinyl-L-ornithine + 2 NH4(+) + CO2. It functions in the pathway amino-acid degradation; L-arginine degradation via AST pathway; L-glutamate and succinate from L-arginine: step 2/5. Functionally, catalyzes the hydrolysis of N(2)-succinylarginine into N(2)-succinylornithine, ammonia and CO(2). The sequence is that of N-succinylarginine dihydrolase from Salmonella gallinarum (strain 287/91 / NCTC 13346).